The following is a 422-amino-acid chain: Trigger factor (422 aa).

A PPIase FKBP-type domain is found at 158 to 242 (GDFAVVSLES…VKGLRKKELP (85 aa)).

The protein belongs to the FKBP-type PPIase family. Tig subfamily.

The protein localises to the cytoplasm. It catalyses the reaction [protein]-peptidylproline (omega=180) = [protein]-peptidylproline (omega=0). Functionally, involved in protein export. Acts as a chaperone by maintaining the newly synthesized protein in an open conformation. Functions as a peptidyl-prolyl cis-trans isomerase. The chain is Trigger factor from Solibacter usitatus (strain Ellin6076).